Consider the following 1020-residue polypeptide: Sodium/potassium-transporting ATPase subunit alpha-2 (1020 aa).

A propeptide spanning residues 1–5 is cleaved from the precursor; sequence MGRGA. The interval 1 to 31 is disordered; sequence MGRGAGREYSPAATTAENGGGKKKQKEKELD. Residues 6 to 85 lie on the Cytoplasmic side of the membrane; the sequence is GREYSPAATT…NALTPPPTTP (80 aa). S10 is modified (phosphoserine). The interval 80–82 is interaction with phosphoinositide-3 kinase; the sequence is PPP. Residues 86 to 106 form a helical membrane-spanning segment; the sequence is EWVKFCRQLFGGFSILLWIGA. Topologically, residues 107 to 129 are extracellular; the sequence is ILCFLAFGIQAAMEDEPSNDNLY. The chain crosses the membrane as a helical span at residues 130–150; sequence LGVVLAAVVIVTGCFSYYQEA. The Cytoplasmic segment spans residues 151-286; it reads KSSKIMDSFK…VGRTPIAMEI (136 aa). Residues 212–227 show a composition bias toward polar residues; it reads DNSSLTGESEPQTRSP. Positions 212 to 231 are disordered; sequence DNSSLTGESEPQTRSPEFTH. Residues 287–306 traverse the membrane as a helical segment; the sequence is EHFIQLITGVAVFLGVSFFV. The Extracellular segment spans residues 307–318; that stretch reads LSLILGYSWLEA. A helical membrane pass occupies residues 319-336; that stretch reads VIFLIGIIVANVPEGLLA. Over 337–769 the chain is Cytoplasmic; it reads TVTVCLTLTA…EEGRLIFDNL (433 aa). D374 acts as the 4-aspartylphosphate intermediate in catalysis. 4 positions are modified to phosphoserine: S439, S450, S496, and S559. T570 is subject to Phosphothreonine. Phosphoserine occurs at positions 587 and 672. Positions 714 and 718 each coordinate Mg(2+). A helical transmembrane segment spans residues 770–789; the sequence is KKSIAYTLTSNIPEITPFLL. Topologically, residues 790–799 are extracellular; that stretch reads FIIANIPLPL. The chain crosses the membrane as a helical span at residues 800–820; that stretch reads GTVTILCIDLGTDMVPAISLA. At 821–840 the chain is on the cytoplasmic side; the sequence is YEAAESDIMKRQPRNPQTDK. S826 bears the Phosphoserine mark. Residues 841–863 traverse the membrane as a helical segment; the sequence is LVNERLISMAYGQIGMIQALGGF. At 864 to 915 the chain is on the extracellular side; that stretch reads FTYFVILAENGFLPSRLLGIRLDWDDRSMNDLEDSYGQEWTYEQRKVVEFTC. A helical transmembrane segment spans residues 916 to 935; the sequence is HTAFFASIVVVQWADLIICK. The Cytoplasmic segment spans residues 936-948; the sequence is TRRNSVFQQGMKN. Position 940 is a phosphoserine; by PKA (S940). Residues 949 to 967 form a helical membrane-spanning segment; the sequence is KILIFGLLEETALAAFLSY. Residues 968-982 lie on the Extracellular side of the membrane; it reads CPGMGVALRMYPLKV. The helical transmembrane segment at 983–1003 threads the bilayer; the sequence is TWWFCAFPYSLLIFIYDEVRK. Residues 1004–1020 are Cytoplasmic-facing; the sequence is LILRRYPGGWVEKETYY.

It belongs to the cation transport ATPase (P-type) (TC 3.A.3) family. Type IIC subfamily. In terms of assembly, the sodium/potassium-transporting ATPase is composed of a catalytic alpha subunit, an auxiliary non-catalytic beta subunit and an additional regulatory subunit. Interacts with regulatory subunit FXYD1.

It localises to the membrane. Its subcellular location is the cell membrane. It catalyses the reaction K(+)(out) + Na(+)(in) + ATP + H2O = K(+)(in) + Na(+)(out) + ADP + phosphate + H(+). This is the catalytic component of the active enzyme, which catalyzes the hydrolysis of ATP coupled with the exchange of sodium and potassium ions across the plasma membrane. This action creates the electrochemical gradient of sodium and potassium, providing the energy for active transport of various nutrients. This is Sodium/potassium-transporting ATPase subunit alpha-2 (ATP1A2) from Bos taurus (Bovine).